Reading from the N-terminus, the 578-residue chain is MPRGLELLIAQTILQGFDAQYGRFLEVTSGAQQRFEQADWHAVQQAMKNRIHLYDHHVGLVVEQLRCITNGQSTDAEFLLRVKEHYTRLLPDYPRFEIAESFFNSVYCRLFDHRSLTPERLFIFSSQPERRFRTIPRPLAKDFYPEHGWEALLMRVLSDLPLRLPWQNKSRDINYIIRHLTETLGPENLSESHLQVANELFYRNKAAWLVGKLITPSGTLPFLLPIHQTDDGELFIDTCLTTTAEASIVFGFARSYFMVYAPLPAALVEWLREILPGKTTAELYMAIGCQKHAKTESYREYLVYLQGCNEQFIEAPGIRGMVMLVFTLPGFDRVFKVIKDRFAPQKEMSAAHVRACYQLVKEHDRVGRMADTQEFENFVLEKRHISPALMELLLQEAAEKITDLGEQIVIRHLYIERRMVPLNIWLEQVEGQQLRDAIEEYGNAIRQLAAANIFPGDMLFKNFGVTRHGRVVFYDYDEICYMTEVNFRDIPPPRYPEDELASEPWYSVSPGDVFPEEFRHWLCADPRIGPLFEEMHADLFRTDYWRALQNRIREGHVEDVYAYRRRQRFSVLYGEMLF.

Residues 315-321 (APGIRGM) and lysine 336 each bind ATP. Residue aspartate 371 is part of the active site.

The protein belongs to the AceK family.

It is found in the cytoplasm. The enzyme catalyses L-seryl-[isocitrate dehydrogenase] + ATP = O-phospho-L-seryl-[isocitrate dehydrogenase] + ADP + H(+). Bifunctional enzyme which can phosphorylate or dephosphorylate isocitrate dehydrogenase (IDH) on a specific serine residue. This is a regulatory mechanism which enables bacteria to bypass the Krebs cycle via the glyoxylate shunt in response to the source of carbon. When bacteria are grown on glucose, IDH is fully active and unphosphorylated, but when grown on acetate or ethanol, the activity of IDH declines drastically concomitant with its phosphorylation. This is Isocitrate dehydrogenase kinase/phosphatase from Shigella dysenteriae serotype 1 (strain Sd197).